The chain runs to 394 residues: MAATTTLRSPKIPHPPPESTPSNLSYLSQISLTPVPKRRRFISIYACSNAESNSQFGSEIKKSQAIELNKVSDEHPYEFNSKDSPNPLPRPLTSADLSNMATEGSRLRVAYQGVRGAYSESAAEKAYPNCEAVPCEQFDTAFEAVERWLVDRAVLPIENSLGGSIHRNYDLLLRHRLHIVGEVKLAIRHCLLANNGVKIEDLKRVLSHPQALAQCENNLTKLGLVREAVDDTAGAAKYIAFQQLKDAGAVASLAAARIYGLNVLAQDIQDDSDNVTRFLMLAREPIIPGTDKPFKTSVVFSLDEGPGVLFKALAVFAMRNINLTKIESRPLQKQALRVLDDSADGFPKYFPYLFYVDFEASMADQRAQNALGHLKEFATFLRVLGSYPSDSGIA.

Residues 1–24 (MAATTTLRSPKIPHPPPESTPSNL) form a disordered region. The N-terminal 47 residues, 1 to 47 (MAATTTLRSPKIPHPPPESTPSNLSYLSQISLTPVPKRRRFISIYAC), are a transit peptide targeting the chloroplast. The 176-residue stretch at 108–283 (RVAYQGVRGA…NVTRFLMLAR (176 aa)) folds into the Prephenate dehydratase domain. The ACT domain maps to 297 to 388 (SVVFSLDEGP…TFLRVLGSYP (92 aa)).

Expressed at low levels in petals (corollas and tubes), stems, leaves, pistils, stamens, ovaries and sepals.

It is found in the plastid. The protein localises to the chloroplast stroma. The catalysed reaction is prephenate + H(+) = 3-phenylpyruvate + CO2 + H2O. The enzyme catalyses L-arogenate + H(+) = L-phenylalanine + CO2 + H2O. Its pathway is amino-acid biosynthesis; L-phenylalanine biosynthesis; L-phenylalanine from L-arogenate: step 1/1. Its function is as follows. Converts the prephenate and L-arogenate produced from the shikimate-chorismate pathway into 3-phenylpyruvate and phenylalanine (Phe), respectively. Involved in floral volatile benzenoids and phenylpropanoids (FVBP) production. In Petunia hybrida (Petunia), this protein is Arogenate dehydratase 2.